Here is a 487-residue protein sequence, read N- to C-terminus: Betaine aldehyde dehydrogenase (487 aa).

Positions 26 and 93 each coordinate K(+). 150–152 (GAW) contacts NAD(+). Residue Lys-162 is the Charge relay system of the active site. Residues 176–179 (KPSE) and 229–232 (SVPT) contribute to the NAD(+) site. Leu-244 serves as a coordination point for K(+). Residue Glu-250 is the Proton acceptor of the active site. Residues Gly-252, Cys-284, and Glu-384 each contribute to the NAD(+) site. Cys-284 acts as the Nucleophile in catalysis. A Cysteine sulfenic acid (-SOH) modification is found at Cys-284. The K(+) site is built by Lys-454 and Gly-457. The active-site Charge relay system is the Glu-461.

This sequence belongs to the aldehyde dehydrogenase family. Dimer of dimers. K(+) is required as a cofactor.

The enzyme catalyses betaine aldehyde + NAD(+) + H2O = glycine betaine + NADH + 2 H(+). Its pathway is amine and polyamine biosynthesis; betaine biosynthesis via choline pathway; betaine from betaine aldehyde: step 1/1. In terms of biological role, involved in the biosynthesis of the osmoprotectant glycine betaine. Catalyzes the irreversible oxidation of betaine aldehyde to the corresponding acid. This Rhizobium etli (strain CIAT 652) protein is Betaine aldehyde dehydrogenase.